A 574-amino-acid polypeptide reads, in one-letter code: High-affinity methionine permease (574 aa).

Residues 1-61 lie on the Cytoplasmic side of the membrane; sequence MSEGRTFLSQ…TELDQGEKQL (61 aa). K28 participates in a covalent cross-link: Glycyl lysine isopeptide (Lys-Gly) (interchain with G-Cter in ubiquitin). The chain crosses the membrane as a helical span at residues 62-82; the sequence is GILSCIGLICNRMLGTGVFAV. The Extracellular segment spans residues 83–92; that stretch reads SSTIYTLCGS. Residues 93-113 form a helical membrane-spanning segment; that stretch reads VGLALIMWAVGAIIAISGLYV. At 114–140 the chain is on the cytoplasmic side; the sequence is YMEFGTAIPKNGGEKNYLEAIFRKPKF. The helical transmembrane segment at 141–161 threads the bilayer; sequence FITCMYAAYIFFLGWAAGNSI. Over 162 to 182 the chain is Extracellular; sequence NTAIMFLTAADTEVTKWNQRG. The chain crosses the membrane as a helical span at residues 183-203; the sequence is IGVAVVFFAFLINSLNVKIGL. Residues 204 to 207 lie on the Cytoplasmic side of the membrane; the sequence is YLQN. Residues 208–228 traverse the membrane as a helical segment; sequence ILGIFKIGIVLFISITGWVAL. Residues 229–293 are Extracellular-facing; sequence GGGLKDGYQS…VRTLKIAGPT (65 aa). The helical transmembrane segment at 294 to 314 threads the bilayer; it reads SMVFLAIIYIFVNIAYFAVVP. Residues 315–340 lie on the Cytoplasmic side of the membrane; that stretch reads KDKLISSKLILAADFFDIVFGGQAKR. A helical membrane pass occupies residues 341 to 361; the sequence is AAAALVGLSALGNVLSVIFSQ. Residues 362–418 are Extracellular-facing; it reads GRIIQQLGREGVLPFSNFFASSKPFNSPMVGLFQHFIVCTVTILAPPPGDAYLLVQN. The helical transmembrane segment at 419–439 threads the bilayer; sequence LISYPMNIINFAISAGLLWIY. Residues 440 to 455 are Cytoplasmic-facing; that stretch reads WQRRQGKIEWNPPIKA. A helical membrane pass occupies residues 456–476; that stretch reads GVFVTGFFTLSNLYLIIAPYV. Residues 477 to 490 lie on the Extracellular side of the membrane; the sequence is PPSNGESVYSSMPY. A helical transmembrane segment spans residues 491-511; it reads WIHCVIAWGIFFFGGVYYVVW. At 512-574 the chain is on the cytoplasmic side; that stretch reads AQLLPRWGHY…HYKSEQEKSL (63 aa). T552 bears the Phosphothreonine mark. S573 carries the phosphoserine modification.

The protein to yeast low affinity methionine permease (MUP3).

It is found in the membrane. In terms of biological role, high affinity permease for methionine. The polypeptide is High-affinity methionine permease (MUP1) (Saccharomyces cerevisiae (strain ATCC 204508 / S288c) (Baker's yeast)).